Here is a 430-residue protein sequence, read N- to C-terminus: Paraneoplastic antigen-like protein 8A (430 aa).

Over residues 219–228 the composition is skewed to basic and acidic residues; that stretch reads WKNTEDHGDP. 3 disordered regions span residues 219-270, 313-364, and 392-430; these read WKNT…NSNY, DPSD…RKKK, and GLGA…SRKL. A compositionally biased stretch (basic residues) spans 232–250; that stretch reads LVRRPGGKIRSRRRKQKKN. Residues 261-270 show a composition bias toward polar residues; that stretch reads SQGSNYNSNY.

This sequence belongs to the PNMA family.

This is Paraneoplastic antigen-like protein 8A from Mus musculus (Mouse).